We begin with the raw amino-acid sequence, 452 residues long: Chloride/fluoride channel protein (452 aa).

10 consecutive transmembrane segments (helical) span residues 23–43 (WLAL…LFLL), 57–77 (WVIW…HLIG), 97–117 (IVPL…HLFG), 160–180 (FASV…VLAI), 188–208 (LFPC…WGVV), 222–242 (LWSV…GLLF), 264–284 (PFAG…NHYI), 315–337 (VFTV…FYIG), 344–364 (LAPL…VAVF), and 386–408 (IAPL…GIYH).

This sequence belongs to the chloride channel (TC 2.A.49) family.

The protein localises to the cell membrane. In terms of biological role, transports chloride and fluoride with similar efficiency. In Pseudomonas syringae pv. tomato (strain ATCC BAA-871 / DC3000), this protein is Chloride/fluoride channel protein (eriC).